The sequence spans 470 residues: UTP--glucose-1-phosphate uridylyltransferase 1 (470 aa).

A2 carries the post-translational modification N-acetylalanine. UTP-binding positions include 86–89 (LNGG), K100, Q163, and G192. 88–89 (GG) is a substrate binding site. Substrate contacts are provided by residues H193 and 221 to 223 (NSD). Positions 223 and 361 each coordinate UTP.

This sequence belongs to the UDPGP type 1 family. In terms of tissue distribution, expressed in roots, rosette leaves, cauline leaves, stems, flowers and siliques.

It is found in the cytoplasm. It catalyses the reaction alpha-D-glucose 1-phosphate + UTP + H(+) = UDP-alpha-D-glucose + diphosphate. Functionally, converts glucose 1-phosphate to UDP-glucose, which is the major glycosyl donor for polysaccharides. Acts redundantly with UGP2 and is essential for the synthesis of sucrose, starch and cell wall, and callose deposition. Involved in the regulation of the programmed cell death (PCD) induced by the fungal toxin fumonisin B1 (FB1). The polypeptide is UTP--glucose-1-phosphate uridylyltransferase 1 (Arabidopsis thaliana (Mouse-ear cress)).